Consider the following 288-residue polypeptide: Beta-lactamase CARB-4 (288 aa).

An N-terminal signal peptide occupies residues 1–17; it reads MKLLLVFSLLIPSMVFA. Ser65 serves as the catalytic Acyl-ester intermediate. Cys72 and Cys118 form a disulfide bridge. 229-231 serves as a coordination point for substrate; it reads RSG.

Belongs to the class-A beta-lactamase family.

The catalysed reaction is a beta-lactam + H2O = a substituted beta-amino acid. With respect to regulation, inhibited by clavulanic acid and sulbactam. Hydrolyzes carbenicillin. Methicillin and oxacillin are weakly hydrolyzed. This Pseudomonas aeruginosa protein is Beta-lactamase CARB-4 (carB4).